We begin with the raw amino-acid sequence, 162 residues long: Inorganic pyrophosphatase (162 aa).

Mg(2+) is bound at residue glutamate 8. Residues lysine 16, arginine 30, and tyrosine 42 each coordinate substrate. Mg(2+) contacts are provided by aspartate 52, aspartate 57, aspartate 84, and aspartate 89. Catalysis depends on aspartate 89, which acts as the Proton acceptor. Tyrosine 126 serves as a coordination point for substrate.

Belongs to the PPase family. As to quaternary structure, homohexamer. The cofactor is Mg(2+).

The protein localises to the cytoplasm. It carries out the reaction diphosphate + H2O = 2 phosphate + H(+). Catalyzes the hydrolysis of inorganic pyrophosphate (PPi) forming two phosphate ions. In Mycobacterium leprae (strain TN), this protein is Inorganic pyrophosphatase.